A 418-amino-acid chain; its full sequence is Serine hydroxymethyltransferase (418 aa).

Residues Leu-121 and 125 to 127 contribute to the (6S)-5,6,7,8-tetrahydrofolate site; that span reads GHL. Lys-230 carries the post-translational modification N6-(pyridoxal phosphate)lysine. 355 to 357 lines the (6S)-5,6,7,8-tetrahydrofolate pocket; that stretch reads SPF.

Belongs to the SHMT family. As to quaternary structure, homodimer. Pyridoxal 5'-phosphate serves as cofactor.

The protein localises to the cytoplasm. It carries out the reaction (6R)-5,10-methylene-5,6,7,8-tetrahydrofolate + glycine + H2O = (6S)-5,6,7,8-tetrahydrofolate + L-serine. Its pathway is one-carbon metabolism; tetrahydrofolate interconversion. It participates in amino-acid biosynthesis; glycine biosynthesis; glycine from L-serine: step 1/1. In terms of biological role, catalyzes the reversible interconversion of serine and glycine with tetrahydrofolate (THF) serving as the one-carbon carrier. This reaction serves as the major source of one-carbon groups required for the biosynthesis of purines, thymidylate, methionine, and other important biomolecules. Also exhibits THF-independent aldolase activity toward beta-hydroxyamino acids, producing glycine and aldehydes, via a retro-aldol mechanism. The polypeptide is Serine hydroxymethyltransferase (Streptococcus pyogenes serotype M49 (strain NZ131)).